Reading from the N-terminus, the 206-residue chain is Transmembrane emp24 domain-containing protein bai (206 aa).

Residues 1–20 form the signal peptide; it reads MARAALIVCLLMACAWSSHA. Over 21 to 172 the chain is Lumenal; that stretch reads VMFKLSPNTQ…RDTNEKTNSR (152 aa). The 111-residue stretch at 30–140 folds into the GOLD domain; the sequence is QKCLKEDIQA…LKPLEVDLKR (111 aa). Residues 173-193 traverse the membrane as a helical segment; that stretch reads VLFFSIFSMCCLLGLATWQVL. Residues 194 to 206 are Cytoplasmic-facing; sequence YLRRYFKAKKLIE.

Belongs to the EMP24/GP25L family.

The protein localises to the membrane. Functionally, eca and bai are essential, though not redundant, for dorsoventral patterning of the embryo. Specifically required during early embryogenesis for the activity of maternal tkv, while the zygotic tkv is not affected. This is Transmembrane emp24 domain-containing protein bai from Drosophila erecta (Fruit fly).